The chain runs to 190 residues: DNA-binding transcriptional repressor TetR (190 aa).

The region spanning 6–66 (ETRSAALLAV…AALDAHDASF (61 aa)) is the HTH tetR-type domain. The segment at residues 29-48 (SMDSVAALAHASKTTIYRRW) is a DNA-binding region (H-T-H motif).

In terms of assembly, homodimer.

Functionally, binds to its own palindromic promoter and represses transcription of its operon; addition of tetracycline or doxycycline (but not tigecycline) interferes with DNA binding. Addition of TetX to the DNA-TetR-antibiotic complex restores DNA binding. This is DNA-binding transcriptional repressor TetR from Mycobacteroides abscessus (strain ATCC 19977 / DSM 44196 / CCUG 20993 / CIP 104536 / JCM 13569 / NCTC 13031 / TMC 1543 / L948) (Mycobacterium abscessus).